Consider the following 248-residue polypeptide: MNLSFSSPPLLAELEVGHHLYWHLGKFTVHGQVLIASWIAIALILTVVILGTRQLQREPAGLQNFVEYALEFVQSIARAQIGEKNFRPWVPYVGTLFLFIFVSNWMGNLFPWKLIPLPEGELASPTNDINTTAGLALLTSIMYFVAGISKRGLSYFKKYIEPTPILLPINVLEDFTKPLSLSFRLFGNILAEELVIAVLVLLVPLFIPVPVMVLFLFTGAIQALIFSTLSAAYIGEALEGHGGGDHRD.

The next 5 helical transmembrane spans lie at 31-51 (GQVL…VILG), 90-110 (VPYV…GNLF), 129-149 (INTT…AGIS), 195-215 (VIAV…MVLF), and 216-236 (LFTG…YIGE).

The protein belongs to the ATPase A chain family. F-type ATPases have 2 components, CF(1) - the catalytic core - and CF(0) - the membrane proton channel. CF(1) has five subunits: alpha(3), beta(3), gamma(1), delta(1), epsilon(1). CF(0) has four main subunits: a, b, b' and c.

Its subcellular location is the cellular thylakoid membrane. Key component of the proton channel; it plays a direct role in the translocation of protons across the membrane. This chain is ATP synthase subunit a, found in Synechococcus sp. (strain JA-2-3B'a(2-13)) (Cyanobacteria bacterium Yellowstone B-Prime).